The following is a 975-amino-acid chain: Synaptopodin 2-like protein (975 aa).

One can recognise a PDZ domain in the interval 6–85; the sequence is EVQVTLAGGA…QLVLTVRRVT (80 aa). Disordered regions lie at residues 18 to 41, 86 to 214, and 314 to 349; these read GFRL…QAGR, DEGS…PAEA, and AGTG…QSDW. A phosphoserine mark is found at S105 and S108. A Phosphothreonine modification is found at T138. S140, S163, S175, and S177 each carry phosphoserine. The segment covering 187–200 has biased composition (polar residues); it reads GSPSQGDSRVSSPS. The span at 202–214 shows a compositional bias: low complexity; sequence EEGAALQPPPAEA. The segment covering 339–349 has biased composition (polar residues); that stretch reads DARSLTNQSDW. A phosphoserine mark is found at S342, S347, S371, S378, and S381. R383, R463, R466, and R476 each carry omega-N-methylarginine. The disordered stretch occupies residues 491–649; sequence KVNEGLGSTS…ETKNSPNPEL (159 aa). Positions 502–516 are enriched in pro residues; sequence APSPFAAPPQGPTPL. Over residues 519 to 528 the composition is skewed to polar residues; sequence FTTVVPSHTP. Composition is skewed to low complexity over residues 530 to 540 and 571 to 580; these read SGASSSTQRSS and SAAAMTSTAS. A phosphoserine mark is found at S667 and S675. The tract at residues 687-731 is disordered; sequence LGGRSYKTLPQVSPKTPPPMAPKTPPPTTPKTPPPVAPKPGSRGL. A compositionally biased stretch (pro residues) spans 701–724; the sequence is KTPPPMAPKTPPPTTPKTPPPVAP. Phosphothreonine is present on residues T702 and T710. R754 carries the omega-N-methylarginine modification. Residues 772 to 797 form a disordered region; sequence EATSGSSLNPGLRPRSPSPTPSLPPS. S787 and S789 each carry phosphoserine. T791 carries the post-translational modification Phosphothreonine. Residues R805, R825, and R888 each carry the omega-N-methylarginine modification. A Phosphoserine modification is found at S890. Residues T891 and T897 each carry the phosphothreonine modification. An Omega-N-methylarginine modification is found at R909. R920 carries the post-translational modification Asymmetric dimethylarginine; alternate. Residue R920 is modified to Omega-N-methylarginine; alternate. Omega-N-methylarginine occurs at positions 953 and 955.

This sequence belongs to the synaptopodin family.

It is found in the cytoplasm. Its subcellular location is the cytoskeleton. Actin-associated protein that may play a role in modulating actin-based shape. The polypeptide is Synaptopodin 2-like protein (Synpo2l) (Mus musculus (Mouse)).